A 236-amino-acid polypeptide reads, in one-letter code: Urease accessory protein UreF (236 aa).

This sequence belongs to the UreF family. UreD, UreF and UreG form a complex that acts as a GTP-hydrolysis-dependent molecular chaperone, activating the urease apoprotein by helping to assemble the nickel containing metallocenter of UreC. The UreE protein probably delivers the nickel.

Its subcellular location is the cytoplasm. Its function is as follows. Required for maturation of urease via the functional incorporation of the urease nickel metallocenter. This is Urease accessory protein UreF from Synechocystis sp. (strain ATCC 27184 / PCC 6803 / Kazusa).